We begin with the raw amino-acid sequence, 125 residues long: Natriuretic peptide GNP1 (125 aa).

The first 25 residues, 1 to 25 (MDPRLVRAGSLVLLLALLVQDQGAA), serve as a signal peptide directing secretion. 2 disordered regions span residues 23–78 (GAAH…PAFK) and 105–125 (VSGM…TGKK). Residues 26-85 (HPARAGQKYKPLIRRSEEDSQALGQEGDVAARAADEEEDAAGPGDALRQPAFKTLLASRE) constitute a propeptide that is removed on maturation. Cys94 and Cys110 are joined by a disulfide.

This sequence belongs to the natriuretic peptide family. Expressed by the venom gland.

Its subcellular location is the secreted. Exhibits natriuretic and vasodepressor activity. Acts by stimulating cGMP. The polypeptide is Natriuretic peptide GNP1 (Varanus varius (Lace monitor lizard)).